The sequence spans 361 residues: Outer membrane protein P2 (361 aa).

The signal sequence occupies residues 1 to 20 (MKKTLAALIVGAFAASAANA).

The protein belongs to the Gram-negative porin family. Homotrimer.

The protein resides in the cell outer membrane. In terms of biological role, forms pores that allow passive diffusion of small molecules across the outer membrane. This chain is Outer membrane protein P2 (ompP2), found in Haemophilus influenzae.